The following is an 820-amino-acid chain: Leucine-rich repeat and guanylate kinase domain-containing protein (820 aa).

The span at Glu72–Glu83 shows a compositional bias: basic and acidic residues. Residues Glu72–Gln96 are disordered. Residues Asp84 to Glu94 show a composition bias toward acidic residues. 9 LRR repeats span residues Tyr129–Val149, His150–Pro171, Tyr172–Gln193, Asn194–His215, Thr216–Ile237, Ser238–Pro259, Ile260–Lys280, Ala281–Asp302, and Leu303–Glu324. An LRRCT domain is found at Asn337 to Lys375. A Guanylate kinase-like domain is found at Tyr414–Arg597. Gly421–Arg428 lines the ATP pocket. Positions Thr800–Arg820 are disordered. Positions Thr811–Arg820 are enriched in pro residues.

As to quaternary structure, interacts (via guanylate kinase-like domain) with RIMBP3 (via coiled-coil region). Interacts (via guanylate kinase-like domain) with HOOK2. Interacts (via LRRCT domain) with KLC3. Interacts with HOOK1 and HOOK3. Highly expressed in the testis. During spermatid development is initially localized to a supra-nuclear region of round spermatids, and is particularly evident at the leading edge of the developing acrosome and acroplaxome. As maturation proceeded and nuclear elongation initiated, LRGUK moves distally to ultimately reside on the microtubules of the manchette. LRGUK is also evident in the sperm basal body and the sperm tail.

Its subcellular location is the cytoplasmic vesicle. The protein resides in the secretory vesicle. It localises to the acrosome. It is found in the cytoplasm. The protein localises to the cytoskeleton. Its subcellular location is the cilium basal body. Its function is as follows. Involved in multiple aspects of sperm assembly including acrosome attachment, shaping of the sperm head and in the early aspects of axoneme development. Not essential for primary cilium biogenesis. In Mus musculus (Mouse), this protein is Leucine-rich repeat and guanylate kinase domain-containing protein (Lrguk).